Reading from the N-terminus, the 482-residue chain is Serine carboxypeptidase-like 26 (482 aa).

Residues 1 to 28 form the signal peptide; it reads MAVAAAAAARRRDVSCLLLLLCFSSSMA. 3 disulfide bridges follow: Cys-101–Cys-366, Cys-263–Cys-274, and Cys-298–Cys-333. The N-linked (GlcNAc...) asparagine glycan is linked to Asn-152. Ser-194 is a catalytic residue. Residues Asn-269, Asn-301, Asn-354, and Asn-375 are each glycosylated (N-linked (GlcNAc...) asparagine). Catalysis depends on residues Asp-403 and His-455.

It belongs to the peptidase S10 family.

Its subcellular location is the secreted. In terms of biological role, acts as a positive regulator of grain size by controlling grain width, filling and weight. High expression of GS5 in the grain is correlated with large grain size. The polypeptide is Serine carboxypeptidase-like 26 (Oryza sativa subsp. japonica (Rice)).